We begin with the raw amino-acid sequence, 235 residues long: Large ribosomal subunit protein uL1 (235 aa).

The protein belongs to the universal ribosomal protein uL1 family. As to quaternary structure, part of the 50S ribosomal subunit.

Binds directly to 23S rRNA. The L1 stalk is quite mobile in the ribosome, and is involved in E site tRNA release. Functionally, protein L1 is also a translational repressor protein, it controls the translation of the L11 operon by binding to its mRNA. The sequence is that of Large ribosomal subunit protein uL1 from Prochlorococcus marinus (strain MIT 9312).